The following is a 275-amino-acid chain: Large ribosomal subunit protein uL2 (275 aa).

The span at 28–38 (RPYDGLLEKKS) shows a compositional bias: basic and acidic residues. Disordered regions lie at residues 28–58 (RPYD…GGGH) and 223–275 (VAMN…RKAK). The segment covering 254–275 (KGHKTRKNKRTDKLIVRRRKAK) has biased composition (basic residues).

The protein belongs to the universal ribosomal protein uL2 family. In terms of assembly, part of the 50S ribosomal subunit. Forms a bridge to the 30S subunit in the 70S ribosome.

Functionally, one of the primary rRNA binding proteins. Required for association of the 30S and 50S subunits to form the 70S ribosome, for tRNA binding and peptide bond formation. It has been suggested to have peptidyltransferase activity; this is somewhat controversial. Makes several contacts with the 16S rRNA in the 70S ribosome. The sequence is that of Large ribosomal subunit protein uL2 from Chromohalobacter salexigens (strain ATCC BAA-138 / DSM 3043 / CIP 106854 / NCIMB 13768 / 1H11).